A 327-amino-acid chain; its full sequence is Undecaprenyl-phosphate 4-deoxy-4-formamido-L-arabinose transferase (327 aa).

Helical transmembrane passes span 236–256 (LSVF…LLVV) and 270–290 (VFML…AMGL).

The protein belongs to the glycosyltransferase 2 family.

The protein resides in the cell inner membrane. It catalyses the reaction UDP-4-deoxy-4-formamido-beta-L-arabinose + di-trans,octa-cis-undecaprenyl phosphate = 4-deoxy-4-formamido-alpha-L-arabinopyranosyl di-trans,octa-cis-undecaprenyl phosphate + UDP. It participates in glycolipid biosynthesis; 4-amino-4-deoxy-alpha-L-arabinose undecaprenyl phosphate biosynthesis; 4-amino-4-deoxy-alpha-L-arabinose undecaprenyl phosphate from UDP-4-deoxy-4-formamido-beta-L-arabinose and undecaprenyl phosphate: step 1/2. It functions in the pathway bacterial outer membrane biogenesis; lipopolysaccharide biosynthesis. Catalyzes the transfer of 4-deoxy-4-formamido-L-arabinose from UDP to undecaprenyl phosphate. The modified arabinose is attached to lipid A and is required for resistance to polymyxin and cationic antimicrobial peptides. The chain is Undecaprenyl-phosphate 4-deoxy-4-formamido-L-arabinose transferase from Enterobacter sp. (strain 638).